The sequence spans 162 residues: Cyclic pyranopterin monophosphate synthase (162 aa).

Substrate is bound by residues 75-77 and 116-117; these read MCH and ME. The active site involves D131.

It belongs to the MoaC family. In terms of assembly, homohexamer; trimer of dimers.

The catalysed reaction is (8S)-3',8-cyclo-7,8-dihydroguanosine 5'-triphosphate = cyclic pyranopterin phosphate + diphosphate. It functions in the pathway cofactor biosynthesis; molybdopterin biosynthesis. Functionally, catalyzes the conversion of (8S)-3',8-cyclo-7,8-dihydroguanosine 5'-triphosphate to cyclic pyranopterin monophosphate (cPMP). This chain is Cyclic pyranopterin monophosphate synthase, found in Staphylococcus epidermidis (strain ATCC 35984 / DSM 28319 / BCRC 17069 / CCUG 31568 / BM 3577 / RP62A).